We begin with the raw amino-acid sequence, 357 residues long: D-alanine--D-alanine ligase (357 aa).

Residues 134–339 (KQLFEHRGLP…YPDLIAKLID (206 aa)) form the ATP-grasp domain. ATP is bound at residue 167 to 222 (NDKLTYPVFVKPANLGSSVGISKCNNEEELKSGIAEAFQFDRKLVIEQGINAREIE). Mg(2+) is bound by residues aspartate 293, glutamate 306, and asparagine 308.

The protein belongs to the D-alanine--D-alanine ligase family. Mg(2+) is required as a cofactor. The cofactor is Mn(2+).

The protein localises to the cytoplasm. It catalyses the reaction 2 D-alanine + ATP = D-alanyl-D-alanine + ADP + phosphate + H(+). It functions in the pathway cell wall biogenesis; peptidoglycan biosynthesis. Its function is as follows. Cell wall formation. The polypeptide is D-alanine--D-alanine ligase (Staphylococcus epidermidis (strain ATCC 35984 / DSM 28319 / BCRC 17069 / CCUG 31568 / BM 3577 / RP62A)).